A 131-amino-acid polypeptide reads, in one-letter code: UPF0382 inner membrane protein YgdD (131 aa).

Residues 1–4 lie on the Periplasmic side of the membrane; that stretch reads MTSR. A helical transmembrane segment spans residues 5–25; it reads FMLIFAAISGFIFVALGAFGA. The Cytoplasmic portion of the chain corresponds to 26-64; that stretch reads HVLSKTMGAVEMGWIQTGLEYQAFHTLAILGLAVAMQRR. A helical membrane pass occupies residues 65–85; it reads ISIWFYWSSVFLALGTVLFSG. The Periplasmic portion of the chain corresponds to 86 to 97; sequence SLYCLALSHLRL. The chain crosses the membrane as a helical span at residues 98-118; that stretch reads WAFVTPVGGVSFLAGWALMLV. Topologically, residues 119–131 are cytoplasmic; that stretch reads GAIRLKRKGVSHE.

The protein belongs to the UPF0382 family.

The protein resides in the cell inner membrane. The chain is UPF0382 inner membrane protein YgdD (ygdD) from Escherichia coli O157:H7.